Consider the following 27-residue polypeptide: M-ectatotoxin-Eb2a (27 aa).

In terms of tissue distribution, expressed by the venom gland.

The protein resides in the secreted. In terms of biological role, antimicrobial peptide forming an alpha-helix in watery and membraneous environments, enabling it to perforate membranes. Active against Gram-negative bacteria E.coli DH5alpha (MIC=5 uM), E.coli MH1 (MIC=0.6 uM) and P.aeruginosa PAO1 (MIC=10 uM) and against Gram-positive bacteria B.subtilis VKM B-501 (MIC=0.6 uM) and A.globiformis VKM Ac-1112 (MIC=0.2 uM). Has cytolytic and hemolytic activity. The chain is M-ectatotoxin-Eb2a from Ectatomma brunneum (Ant).